Here is a 102-residue protein sequence, read N- to C-terminus: Small ribosomal subunit protein uS10 (102 aa).

This sequence belongs to the universal ribosomal protein uS10 family. As to quaternary structure, part of the 30S ribosomal subunit.

Its function is as follows. Involved in the binding of tRNA to the ribosomes. The sequence is that of Small ribosomal subunit protein uS10 from Kosmotoga olearia (strain ATCC BAA-1733 / DSM 21960 / TBF 19.5.1).